A 231-amino-acid polypeptide reads, in one-letter code: Large ribosomal subunit protein uL1 (231 aa).

The protein belongs to the universal ribosomal protein uL1 family. Part of the 50S ribosomal subunit.

Its function is as follows. Binds directly to 23S rRNA. The L1 stalk is quite mobile in the ribosome, and is involved in E site tRNA release. In terms of biological role, protein L1 is also a translational repressor protein, it controls the translation of the L11 operon by binding to its mRNA. The protein is Large ribosomal subunit protein uL1 of Lactobacillus delbrueckii subsp. bulgaricus (strain ATCC 11842 / DSM 20081 / BCRC 10696 / JCM 1002 / NBRC 13953 / NCIMB 11778 / NCTC 12712 / WDCM 00102 / Lb 14).